A 424-amino-acid chain; its full sequence is MLDIKRIRTDFEAVTEKLATRGVDAAVLNEMKEIDAKRRNILVKVETLKAERNTVSAEIAQAKRNKENTDDKIAAMQNLSAEVKALDAELAEIDAKLTEFTTTLPNIPADSVPVGADEDDNVEVRRWGTPREFDFEPKAHWDLGEDLGILDWERGGKVTGARFLFYKGLGARLERAIYNFMLDEHGKEGYTEVITPYIVNHDSMFGTGQYPKFKEDTFELSDTNFVLIPTAEVPLANYYRDEILDGKDLPIYFTAMSPSFRSEAGSAGRDTRGLIRLHQFHKVEMVKFAKPEESYEELEKMTANAENILQKLNLPYRVVALSTGDMGFSAAKTYDLEVWIPAQNNYREISSCSNTEDFQARRAQIRYRDEADGKVKLLHTLNGSGLAVGRTVAAILENYQNEDGSVTIPEALRPYMGGAEVIKP.

230-232 (TAE) contacts L-serine. Residue 261–263 (RSE) participates in ATP binding. Glutamate 284 provides a ligand contact to L-serine. 348-351 (EISS) is an ATP binding site. Serine 384 is an L-serine binding site.

This sequence belongs to the class-II aminoacyl-tRNA synthetase family. Type-1 seryl-tRNA synthetase subfamily. Homodimer. The tRNA molecule binds across the dimer.

It localises to the cytoplasm. It catalyses the reaction tRNA(Ser) + L-serine + ATP = L-seryl-tRNA(Ser) + AMP + diphosphate + H(+). It carries out the reaction tRNA(Sec) + L-serine + ATP = L-seryl-tRNA(Sec) + AMP + diphosphate + H(+). The protein operates within aminoacyl-tRNA biosynthesis; selenocysteinyl-tRNA(Sec) biosynthesis; L-seryl-tRNA(Sec) from L-serine and tRNA(Sec): step 1/1. Catalyzes the attachment of serine to tRNA(Ser). Is also able to aminoacylate tRNA(Sec) with serine, to form the misacylated tRNA L-seryl-tRNA(Sec), which will be further converted into selenocysteinyl-tRNA(Sec). In Streptococcus pneumoniae (strain ATCC 700669 / Spain 23F-1), this protein is Serine--tRNA ligase.